Reading from the N-terminus, the 346-residue chain is MSASKEEIAALIVNYFSSIVEKKEISEDGADSLNVAMDCISEAFGFEREAVSGILGKSEFKGQHLADILNSASRVPESNKKDDAENVEINIPEDDAETKAKAEDLKMQGNKAMANKDYELAINKYTEAIKVLPTNAIYYANRAAAHSSLKEYDQAVKDAESAISIDPSYFRGYSRLGFAKYAQGKPEEALEAYKKVLDIEGDNATEAMKRDYESAKKKVEQSLNLEKTVPEQSRDADVDASQGASAGGLPDLGSLLGGGLGGLMNNPQLMQAAQKMMSNPGAMQNIQKMMQDPSIRQMAEGFASGGGTPNLSDLMNNPALRNMAGNLFGGAGAQSTDETPDNENKQ.

TPR repeat units follow at residues 102–135 (AEDL…LPTN), 136–169 (AIYY…DPSY), 170–203 (FRGY…EGDN), and 205–229 (TEAM…EKTV). The segment at 219–249 (VEQSLNLEKTVPEQSRDADVDASQGASAGGL) is disordered. A compositionally biased stretch (basic and acidic residues) spans 228–237 (TVPEQSRDAD). At T308 the chain carries Phosphothreonine. The interval 325–346 (GNLFGGAGAQSTDETPDNENKQ) is disordered.

This sequence belongs to the SGT family. Interacts with HSC82, HSP104, MDY2, SSA1 and SSA2.

Its subcellular location is the cytoplasm. Its function is as follows. Co-chaperone that binds to the molecular chaperone Hsp70 (SSA1 and SSA2). Regulates Hsp70 ATPase activity. Required for recovery from heat shock. In Saccharomyces cerevisiae (strain ATCC 204508 / S288c) (Baker's yeast), this protein is Small glutamine-rich tetratricopeptide repeat-containing protein 2 (SGT2).